Consider the following 120-residue polypeptide: NADH-ubiquinone oxidoreductase chain 3 (120 aa).

3 helical membrane passes run leucine 6–valine 26, isoleucine 63–phenylalanine 83, and phenylalanine 85–tyrosine 105.

It belongs to the complex I subunit 3 family.

Its subcellular location is the mitochondrion membrane. The catalysed reaction is a ubiquinone + NADH + 5 H(+)(in) = a ubiquinol + NAD(+) + 4 H(+)(out). In terms of biological role, core subunit of the mitochondrial membrane respiratory chain NADH dehydrogenase (Complex I) that is believed to belong to the minimal assembly required for catalysis. Complex I functions in the transfer of electrons from NADH to the respiratory chain. The immediate electron acceptor for the enzyme is believed to be ubiquinone. The chain is NADH-ubiquinone oxidoreductase chain 3 (ND3) from Paramecium tetraurelia.